We begin with the raw amino-acid sequence, 162 residues long: Caveolin-2 (162 aa).

Topologically, residues 1 to 86 are cytoplasmic; the sequence is MGLETEKADV…FEISKYVMYK (86 aa). A Phosphotyrosine; by SRC modification is found at Tyr19. Ser20 and Ser23 each carry phosphoserine. Position 27 is a phosphotyrosine; by SRC (Tyr27). Ser36 bears the Phosphoserine mark. The segment at residues 87-107 is an intramembrane region (helical); sequence FLTVFLAIPLAFIAGILFATL. The Cytoplasmic portion of the chain corresponds to 108 to 162; that stretch reads SCLHIWILMPFVKTCLMVLPSVQTIWKSVTDVIIAPLCTSVGRSFSSVSLQLSQD.

This sequence belongs to the caveolin family. In terms of assembly, monomer or homodimer. Interacts with CAV1; the interaction forms a stable heterooligomeric complex that is required for targeting to lipid rafts and for caveolae formation. Tyrosine phosphorylated forms do not form heterooligomers with the Tyr-19-phosphorylated form existing as a monomer or dimer, and the Tyr-27-form as a monomer only. Interacts (tyrosine phosphorylated form) with the SH2 domain-containing proteins, RASA1, NCK1 and SRC. Interacts (tyrosine phosphorylated form) with INSR, the interaction (Tyr-27-phosphorylated form) is increased on insulin stimulation. Interacts (Tyr-19 phosphorylated form) with MAPK1 (phosphorylated form); the interaction, promoted by insulin, leads to nuclear location and MAPK1 activation. Interacts with STAT3; the interaction is increased on insulin-induced tyrosine phosphorylation leading to STAT activation. Phosphorylated on serine and tyrosine residues. CAV1 promotes phosphorylation on Ser-23 which then targets the complex to the plasma membrane, lipid rafts and caveolae. Phosphorylation on Ser-36 appears to modulate mitosis in endothelial cells. Phosphorylation on both Tyr-19 and Tyr-27 is required for insulin-induced 'Ser-727' phosphorylation of STAT3 and its activation. Phosphorylation on Tyr-19 is required for insulin-induced phosphorylation of MAPK1 and DNA binding of STAT3. Tyrosine phosphorylation is induced by both EGF and insulin (By. similarity).

It localises to the nucleus. The protein localises to the cytoplasm. It is found in the golgi apparatus membrane. The protein resides in the cell membrane. Its subcellular location is the membrane. It localises to the caveola. May act as a scaffolding protein within caveolar membranes. Interacts directly with G-protein alpha subunits and can functionally regulate their activity. Acts as an accessory protein in conjunction with CAV1 in targeting to lipid rafts and driving caveolae formation. The Ser-36 phosphorylated form has a role in modulating mitosis in endothelial cells. Positive regulator of cellular mitogenesis of the MAPK signaling pathway. Required for the insulin-stimulated nuclear translocation and activation of MAPK1 and STAT3, and the subsequent regulation of cell cycle progression. This Pongo abelii (Sumatran orangutan) protein is Caveolin-2 (CAV2).